The following is a 483-amino-acid chain: Bromoperoxidase-catalase (483 aa).

Residues 1–24 (MTQGPLTTEAGAPVADNQNSETAG) are disordered. Catalysis depends on residues His-54 and Asn-127. Tyr-337 serves as a coordination point for heme.

This sequence belongs to the catalase family.

The enzyme catalyses 2 H2O2 = O2 + 2 H2O. This is Bromoperoxidase-catalase (bca) from Streptomyces venezuelae (strain ATCC 10712 / CBS 650.69 / DSM 40230 / JCM 4526 / NBRC 13096 / PD 04745).